The primary structure comprises 689 residues: Glycine--tRNA ligase beta subunit (689 aa).

This sequence belongs to the class-II aminoacyl-tRNA synthetase family. As to quaternary structure, tetramer of two alpha and two beta subunits.

It localises to the cytoplasm. The enzyme catalyses tRNA(Gly) + glycine + ATP = glycyl-tRNA(Gly) + AMP + diphosphate. The chain is Glycine--tRNA ligase beta subunit from Escherichia coli O8 (strain IAI1).